The sequence spans 130 residues: Small ribosomal subunit protein uS8 (130 aa).

The protein belongs to the universal ribosomal protein uS8 family. Part of the 30S ribosomal subunit. Contacts proteins S5 and S12.

Functionally, one of the primary rRNA binding proteins, it binds directly to 16S rRNA central domain where it helps coordinate assembly of the platform of the 30S subunit. In Alteromonas mediterranea (strain DSM 17117 / CIP 110805 / LMG 28347 / Deep ecotype), this protein is Small ribosomal subunit protein uS8.